The primary structure comprises 450 residues: Regulator of sigma-E protease RseP (450 aa).

A helical membrane pass occupies residues 1–21 (MLSILWNLAAFIIALGVLITV). A Zn(2+)-binding site is contributed by H22. Residues 22 to 103 (HEFGHFWVAR…VGQRAAIIAA (82 aa)) lie on the Periplasmic side of the membrane. E23 is a catalytic residue. Position 26 (H26) interacts with Zn(2+). Residues 104–124 (GPVANFIFAIFAYWLVFIIGV) traverse the membrane as a helical segment. PDZ domains follow at residues 115–186 (AYWL…APFG) and 199–291 (HWAF…TPDT). Over 125-375 (PGVRPVIGEI…QGAGMSAEFG (251 aa)) the chain is Cytoplasmic. The chain crosses the membrane as a helical span at residues 376 to 396 (VIYYLMFLALISVNLGIINLF). Topologically, residues 397–429 (PLPVLDGGHLLFLAIEKLKGGPVSERVQDFSYR) are periplasmic. Residues 430-450 (IGSILLVLLMGLALFNDFSRL) form a helical membrane-spanning segment.

Belongs to the peptidase M50B family. Zn(2+) is required as a cofactor.

It is found in the cell inner membrane. A site-2 regulated intramembrane protease that cleaves the peptide bond between 'Ala-108' and 'Cys-109' in the transmembrane region of RseA. Part of a regulated intramembrane proteolysis (RIP) cascade. Acts on DegS-cleaved RseA to release the cytoplasmic domain of RseA. This provides the cell with sigma-E (RpoE) activity through the proteolysis of RseA. This chain is Regulator of sigma-E protease RseP (rsep), found in Salmonella typhimurium (strain 14028s / SGSC 2262).